The sequence spans 236 residues: MTRRYWNINLKEMIEAGVHFGHGIKKWNPKMAPYISAKRKGTHITNLARTARFLSEACDLVFDAASQGKSFLIVGTKKRAADLVASAAIRSRCHYVNKKWFSGMLTNWSITKTRLSQFRDLRAEEKMGKFHHLPKRDAAILKRKLSTLQRYLGGIKYMTRLPDIVIVLDQQKEYIALQECAILGIPTISLVDTNCDPDLANISIPANDDTMTSIRLILNKLVFAISEGRSLYIRNR.

It belongs to the universal ribosomal protein uS2 family.

It localises to the plastid. Its subcellular location is the chloroplast. The sequence is that of Small ribosomal subunit protein uS2c (rps2) from Zea mays (Maize).